Consider the following 137-residue polypeptide: Large ribosomal subunit protein uL16 (137 aa).

This sequence belongs to the universal ribosomal protein uL16 family. In terms of assembly, part of the 50S ribosomal subunit.

Its function is as follows. Binds 23S rRNA and is also seen to make contacts with the A and possibly P site tRNAs. This Mesorhizobium japonicum (strain LMG 29417 / CECT 9101 / MAFF 303099) (Mesorhizobium loti (strain MAFF 303099)) protein is Large ribosomal subunit protein uL16.